We begin with the raw amino-acid sequence, 547 residues long: Chaperonin GroEL 1 (547 aa).

Residues 30-33 (TLGP), Lys51, 87-91 (DGTTT), Gly415, and Asp496 contribute to the ATP site.

It belongs to the chaperonin (HSP60) family. As to quaternary structure, forms a cylinder of 14 subunits composed of two heptameric rings stacked back-to-back. Interacts with the co-chaperonin GroES.

Its subcellular location is the cytoplasm. It carries out the reaction ATP + H2O + a folded polypeptide = ADP + phosphate + an unfolded polypeptide.. In terms of biological role, together with its co-chaperonin GroES, plays an essential role in assisting protein folding. The GroEL-GroES system forms a nano-cage that allows encapsulation of the non-native substrate proteins and provides a physical environment optimized to promote and accelerate protein folding. The sequence is that of Chaperonin GroEL 1 from Rhodopseudomonas palustris (strain BisB5).